The primary structure comprises 637 residues: Coiled-coil domain-containing protein 22 homolog (637 aa).

Coiled coils occupy residues 322–489 and 608–637; these read ETEI…YKQA and SDRV…ETKN.

Belongs to the CCDC22 family.

The protein is Coiled-coil domain-containing protein 22 homolog of Dictyostelium discoideum (Social amoeba).